Reading from the N-terminus, the 290-residue chain is Putative phosphatase MPN_427 (290 aa).

Asp-16 acts as the Nucleophile in catalysis. A Mg(2+)-binding site is contributed by Asp-16. Phosphate is bound at residue Leu-17. Position 18 (Asp-18) interacts with Mg(2+). Residues 53–54 and Lys-216 contribute to the phosphate site; that span reads TG. Asp-239 and Ser-240 together coordinate Mg(2+). Asn-242 is a binding site for phosphate.

This sequence belongs to the HAD-like hydrolase superfamily. Cof family. Mg(2+) is required as a cofactor.

This chain is Putative phosphatase MPN_427, found in Mycoplasma pneumoniae (strain ATCC 29342 / M129 / Subtype 1) (Mycoplasmoides pneumoniae).